Consider the following 104-residue polypeptide: Large ribosomal subunit protein bL21 (104 aa).

It belongs to the bacterial ribosomal protein bL21 family. Part of the 50S ribosomal subunit. Contacts protein L20.

This protein binds to 23S rRNA in the presence of protein L20. The polypeptide is Large ribosomal subunit protein bL21 (Symbiobacterium thermophilum (strain DSM 24528 / JCM 14929 / IAM 14863 / T)).